We begin with the raw amino-acid sequence, 358 residues long: MNPFPRAEISSSALQTNLAALRQQAPASRVMAVVKANGYGHGLLNVANCLVSADGFGLARLDEALELRAGGVTARLLLLEGFFRATDLPLLVGHDIDTVVHHSSQLEMLEQTVLSKPVTVWLKVDSGMHRLGFTPEQFSTVYARLMACPNVAKPIHLMTHFACADEPDNSYTSVQMAAFNSLTAGLPGFRTLANSAGALYWPQSQGDWIRPGIALYGVSPVTGDCGANHGLVPAMELVSQLIAVRDHKANQPVGYGCFWTAKQDTRLGVVAIGYGDGYPRNAPEGTPVWVNGRRVPIVGRVSMDMLTVDLGQDAQDKVGDSALLWGKALPVEEVAEHIGTIAYELVTKLTPRVAVCLA.

Residue lysine 35 is the Proton acceptor; specific for D-alanine of the active site. Residue lysine 35 is modified to N6-(pyridoxal phosphate)lysine. Arginine 130 serves as a coordination point for substrate. The active-site Proton acceptor; specific for L-alanine is tyrosine 255. Methionine 303 lines the substrate pocket.

The protein belongs to the alanine racemase family. Requires pyridoxal 5'-phosphate as cofactor.

The catalysed reaction is L-alanine = D-alanine. It functions in the pathway amino-acid biosynthesis; D-alanine biosynthesis; D-alanine from L-alanine: step 1/1. Catalyzes the interconversion of L-alanine and D-alanine. May also act on other amino acids. The sequence is that of Alanine racemase (alr) from Shewanella baltica (strain OS185).